Consider the following 340-residue polypeptide: Anthranilate phosphoribosyltransferase (340 aa).

Residues Gly-83, 86–87 (GD), Thr-91, 93–96 (NVST), 111–119 (KHGNRSVSS), and Ser-123 each bind 5-phospho-alpha-D-ribose 1-diphosphate. Gly-83 provides a ligand contact to anthranilate. Ser-95 is a binding site for Mg(2+). Asn-114 contacts anthranilate. Arg-169 is a binding site for anthranilate. The Mg(2+) site is built by Asp-228 and Glu-229.

It belongs to the anthranilate phosphoribosyltransferase family. Homodimer. It depends on Mg(2+) as a cofactor.

The catalysed reaction is N-(5-phospho-beta-D-ribosyl)anthranilate + diphosphate = 5-phospho-alpha-D-ribose 1-diphosphate + anthranilate. The protein operates within amino-acid biosynthesis; L-tryptophan biosynthesis; L-tryptophan from chorismate: step 2/5. Catalyzes the transfer of the phosphoribosyl group of 5-phosphorylribose-1-pyrophosphate (PRPP) to anthranilate to yield N-(5'-phosphoribosyl)-anthranilate (PRA). In Aquifex aeolicus (strain VF5), this protein is Anthranilate phosphoribosyltransferase.